The sequence spans 275 residues: 4-hydroxy-3-methylbut-2-enyl diphosphate reductase (275 aa).

Residue Cys-12 participates in [4Fe-4S] cluster binding. 2 residues coordinate (2E)-4-hydroxy-3-methylbut-2-enyl diphosphate: His-40 and His-70. Residues His-40 and His-70 each contribute to the dimethylallyl diphosphate site. Residues His-40 and His-70 each contribute to the isopentenyl diphosphate site. Cys-92 serves as a coordination point for [4Fe-4S] cluster. His-119 is a (2E)-4-hydroxy-3-methylbut-2-enyl diphosphate binding site. His-119 is a dimethylallyl diphosphate binding site. His-119 serves as a coordination point for isopentenyl diphosphate. Glu-121 acts as the Proton donor in catalysis. Thr-151 contributes to the (2E)-4-hydroxy-3-methylbut-2-enyl diphosphate binding site. Cys-181 provides a ligand contact to [4Fe-4S] cluster. (2E)-4-hydroxy-3-methylbut-2-enyl diphosphate is bound by residues Ser-209, Ser-210, Asn-211, and Ser-251. Residues Ser-209, Ser-210, Asn-211, and Ser-251 each coordinate dimethylallyl diphosphate. Residues Ser-209, Ser-210, Asn-211, and Ser-251 each contribute to the isopentenyl diphosphate site.

Belongs to the IspH family. [4Fe-4S] cluster is required as a cofactor.

It catalyses the reaction isopentenyl diphosphate + 2 oxidized [2Fe-2S]-[ferredoxin] + H2O = (2E)-4-hydroxy-3-methylbut-2-enyl diphosphate + 2 reduced [2Fe-2S]-[ferredoxin] + 2 H(+). The enzyme catalyses dimethylallyl diphosphate + 2 oxidized [2Fe-2S]-[ferredoxin] + H2O = (2E)-4-hydroxy-3-methylbut-2-enyl diphosphate + 2 reduced [2Fe-2S]-[ferredoxin] + 2 H(+). It functions in the pathway isoprenoid biosynthesis; dimethylallyl diphosphate biosynthesis; dimethylallyl diphosphate from (2E)-4-hydroxy-3-methylbutenyl diphosphate: step 1/1. Its pathway is isoprenoid biosynthesis; isopentenyl diphosphate biosynthesis via DXP pathway; isopentenyl diphosphate from 1-deoxy-D-xylulose 5-phosphate: step 6/6. Functionally, catalyzes the conversion of 1-hydroxy-2-methyl-2-(E)-butenyl 4-diphosphate (HMBPP) into a mixture of isopentenyl diphosphate (IPP) and dimethylallyl diphosphate (DMAPP). Acts in the terminal step of the DOXP/MEP pathway for isoprenoid precursor biosynthesis. The chain is 4-hydroxy-3-methylbut-2-enyl diphosphate reductase from Thermotoga maritima (strain ATCC 43589 / DSM 3109 / JCM 10099 / NBRC 100826 / MSB8).